A 444-amino-acid chain; its full sequence is Trigger factor (444 aa).

Residues 160–245 enclose the PPIase FKBP-type domain; it reads DMQVTFDFEG…VKQVEKPKLP (86 aa).

It belongs to the FKBP-type PPIase family. Tig subfamily.

It localises to the cytoplasm. The catalysed reaction is [protein]-peptidylproline (omega=180) = [protein]-peptidylproline (omega=0). Involved in protein export. Acts as a chaperone by maintaining the newly synthesized protein in an open conformation. Functions as a peptidyl-prolyl cis-trans isomerase. This Acinetobacter baylyi (strain ATCC 33305 / BD413 / ADP1) protein is Trigger factor.